We begin with the raw amino-acid sequence, 300 residues long: Chaperone protein dnaJ 50 (300 aa).

A signal peptide spans 1–27; that stretch reads MAPPVTERWCLALILLFLSLFVQSSTA. The Lumenal segment spans residues 28-122; that stretch reads IYCGAEDCYA…RAKYGHKSDP (95 aa). Residues 34-98 enclose the J domain; that stretch reads DCYALLGVAQ…TTRAQYDYAI (65 aa). N-linked (GlcNAc...) asparagine glycans are attached at residues Asn46 and Asn88. A helical transmembrane segment spans residues 123-143; it reads RAVLVGLLVVLSAFQYLNNVA. The Cytoplasmic segment spans residues 144–206; that stretch reads RYNEAIATVK…LQIKGAEKPS (63 aa). The helical transmembrane segment at 207 to 227 threads the bilayer; that stretch reads VWELLGVRFILLPYTIIKLLV. The Lumenal portion of the chain corresponds to 228-300; the sequence is WYSSWVWRYK…EMRKESKRRR (73 aa).

As to expression, expressed in leaves, flower buds and flowers.

It localises to the endoplasmic reticulum membrane. In terms of biological role, may play a role in protein folding in the endoplasmic reticulum. In Arabidopsis thaliana (Mouse-ear cress), this protein is Chaperone protein dnaJ 50 (C50).